The sequence spans 160 residues: MDASRKNRLKLIKNTMIKMEEQIVKSMIKAFTMLESLLVLGLVSILALGLSGSVQSTFSAVEEQIFFMEFEELYRETQKRSVASQQKTSLNLDGQMISNGSQKLTVPKGIQAPSGQSITFDRAGGNSSLAKVEFQTSKGAIRYQLYLGNGKIKRIKETKN.

The chain crosses the membrane as a helical span at residues 30 to 50 (AFTMLESLLVLGLVSILALGL).

As to quaternary structure, the transformation pili are flexible filaments, consisting mainly of the major pilin ComGC and smaller amounts of the minor pilins, including at least ComGD, ComGF and ComGG, and perhaps ComGE. Interacts with ComGE. Interacts with ComGF. Interacts with ComGG.

It localises to the cell membrane. The protein resides in the cell surface. The protein localises to the fimbrium. Its function is as follows. Required for formation of the type IV-like pilus (T4P) that plays a role in transformation. Transformation pili are dynamically extended and retracted, perhaps thereby promoting DNA uptake and transformation. Involved in transformation. Required for DNA binding. This Streptococcus pneumoniae (strain ATCC BAA-255 / R6) protein is Competence protein ComGD.